Consider the following 268-residue polypeptide: Zygote formation protein zyg1 (268 aa).

Its function is as follows. Plays an essential role in zygote formation by inducing sexual cell fusion. Overexpressing cells eventually formed many loose mounds, in which giant multinucleate cells were surrounded by normal-sized cells. The protein is Zygote formation protein zyg1 (zyg1) of Dictyostelium mucoroides (Slime mold).